A 376-amino-acid chain; its full sequence is Queuine tRNA-ribosyltransferase (376 aa).

Asp-89 functions as the Proton acceptor in the catalytic mechanism. Substrate-binding positions include 89–93 (DSGGF), Asp-143, Gln-187, and Gly-214. The RNA binding stretch occupies residues 245-251 (GVGKPQD). Asp-264 (nucleophile) is an active-site residue. The interval 269-273 (TRNAR) is RNA binding; important for wobble base 34 recognition. Residues Cys-302, Cys-304, Cys-307, and His-333 each contribute to the Zn(2+) site.

This sequence belongs to the queuine tRNA-ribosyltransferase family. Homodimer. Within each dimer, one monomer is responsible for RNA recognition and catalysis, while the other monomer binds to the replacement base PreQ1. Zn(2+) serves as cofactor.

The enzyme catalyses 7-aminomethyl-7-carbaguanine + guanosine(34) in tRNA = 7-aminomethyl-7-carbaguanosine(34) in tRNA + guanine. It functions in the pathway tRNA modification; tRNA-queuosine biosynthesis. Functionally, catalyzes the base-exchange of a guanine (G) residue with the queuine precursor 7-aminomethyl-7-deazaguanine (PreQ1) at position 34 (anticodon wobble position) in tRNAs with GU(N) anticodons (tRNA-Asp, -Asn, -His and -Tyr). Catalysis occurs through a double-displacement mechanism. The nucleophile active site attacks the C1' of nucleotide 34 to detach the guanine base from the RNA, forming a covalent enzyme-RNA intermediate. The proton acceptor active site deprotonates the incoming PreQ1, allowing a nucleophilic attack on the C1' of the ribose to form the product. After dissociation, two additional enzymatic reactions on the tRNA convert PreQ1 to queuine (Q), resulting in the hypermodified nucleoside queuosine (7-(((4,5-cis-dihydroxy-2-cyclopenten-1-yl)amino)methyl)-7-deazaguanosine). This is Queuine tRNA-ribosyltransferase from Erwinia tasmaniensis (strain DSM 17950 / CFBP 7177 / CIP 109463 / NCPPB 4357 / Et1/99).